The chain runs to 347 residues: ATPase GET3 (347 aa).

Residue 26–33 (KGGVGKTT) coordinates ATP. D57 is a catalytic residue. Positions 241 and 268 each coordinate ATP. Positions 279 and 282 each coordinate Zn(2+).

It belongs to the arsA ATPase family. Homodimer. Component of the Golgi to ER traffic (GET) complex, which is composed of GET1, GET2 and GET3. Within the complex, GET1 and GET2 form a heterotetramer which is stabilized by phosphatidylinositol binding and which binds to the GET3 homodimer. Interacts with the chloride channel protein GEF1.

The protein resides in the cytoplasm. The protein localises to the endoplasmic reticulum. It localises to the golgi apparatus. Its function is as follows. ATPase required for the post-translational delivery of tail-anchored (TA) proteins to the endoplasmic reticulum. Recognizes and selectively binds the transmembrane domain of TA proteins in the cytosol. This complex then targets to the endoplasmic reticulum by membrane-bound receptors GET1 and GET2, where the tail-anchored protein is released for insertion. This process is regulated by ATP binding and hydrolysis. ATP binding drives the homodimer towards the closed dimer state, facilitating recognition of newly synthesized TA membrane proteins. ATP hydrolysis is required for insertion. Subsequently, the homodimer reverts towards the open dimer state, lowering its affinity for the GET1-GET2 receptor, and returning it to the cytosol to initiate a new round of targeting. Cooperates with the HDEL receptor ERD2 to mediate the ATP-dependent retrieval of resident ER proteins that contain a C-terminal H-D-E-L retention signal from the Golgi to the ER. Involved in low-level resistance to the oxyanions arsenite and arsenate, and in heat tolerance. This is ATPase GET3 from Meyerozyma guilliermondii (strain ATCC 6260 / CBS 566 / DSM 6381 / JCM 1539 / NBRC 10279 / NRRL Y-324) (Yeast).